The chain runs to 500 residues: MSAEKKYVVALDQGTTSSRAIVFDQDANIVGTSQREFTQHYPKAGWVEHDPMEIWATQSSVFTEVLAKTGLRSEEIAAIGITNQRETTVVWEKATGKPIYNAIVWQCRRTAAICEELKARGLEEYVRENTGLVLDAYFSGTKVKWILDNVEGAREKAMNGELLFGTIDTWLVWKMTNGEVHVTDPTNASRTMLYNIRDLKWDQKMLDELGIPMSMLPQVKPSSEVYGYTTRGGGSRIPIAGIAGDQQSALFGQLCFEKGMAKNTYGTGCFMLMNTGTEPVRSNNGLLTTVAIGPKGEVNYALEGAVFMGGATIQWLRDELKIIHDARDTDYFASKVGDTNGVYLVPAFVGLGAPYWDPYARGTMVGLTRGANRNHIIRAALESIAYQSRDVLDAMQQDSGIKLAALKVDGGAVANDFLMQFQADMMHTPVVRPTRIETTAMGAAFLAGLAVGFWKSSEELEDKFSVDREFIPQMDRDDRAKRYNGWKKAVERSRRWAEEE.

Residue Thr-15 coordinates ADP. The ATP site is built by Thr-15, Thr-16, and Ser-17. Thr-15 serves as a coordination point for sn-glycerol 3-phosphate. Position 19 (Arg-19) interacts with ADP. Sn-glycerol 3-phosphate-binding residues include Arg-85, Glu-86, Tyr-137, and Asp-245. Positions 85, 86, 137, 245, and 246 each coordinate glycerol. ADP-binding residues include Thr-267 and Gly-310. Residues Thr-267, Gly-310, Gln-314, and Gly-411 each contribute to the ATP site. Positions 411 and 415 each coordinate ADP.

The protein belongs to the FGGY kinase family.

It catalyses the reaction glycerol + ATP = sn-glycerol 3-phosphate + ADP + H(+). It functions in the pathway polyol metabolism; glycerol degradation via glycerol kinase pathway; sn-glycerol 3-phosphate from glycerol: step 1/1. Its activity is regulated as follows. Inhibited by fructose 1,6-bisphosphate (FBP). Its function is as follows. Key enzyme in the regulation of glycerol uptake and metabolism. Catalyzes the phosphorylation of glycerol to yield sn-glycerol 3-phosphate. The protein is Glycerol kinase of Aeromonas hydrophila subsp. hydrophila (strain ATCC 7966 / DSM 30187 / BCRC 13018 / CCUG 14551 / JCM 1027 / KCTC 2358 / NCIMB 9240 / NCTC 8049).